Consider the following 166-residue polypeptide: Cofilin-1 (166 aa).

Position 2 is an N-acetylalanine (A2). Phosphoserine occurs at positions 3 and 8. The region spanning 4 to 153 is the ADF-H domain; the sequence is GVAVSDGVIK…KDRCTLAEKL (150 aa). Position 13 is an N6-acetyllysine (K13). T25 is modified (phosphothreonine). A Nuclear localization signal motif is present at residues 30 to 34; that stretch reads KKRKK. S41 carries the phosphoserine modification. Y68 is modified (phosphotyrosine). K73 bears the N6-acetyllysine mark. Residue K132 forms a Glycyl lysine isopeptide (Lys-Gly) (interchain with G-Cter in SUMO2) linkage. At Y140 the chain carries Phosphotyrosine. The residue at position 144 (K144) is an N6-acetyllysine. S156 carries the post-translational modification Phosphoserine.

The protein belongs to the actin-binding proteins ADF family. Can bind G- and F-actin in a 1:1 ratio of cofilin to actin. It is a major component of intranuclear and cytoplasmic actin rods. Interacts with the subcortical maternal complex (SCMC) via interaction with TLE6 and NLRP5. Interacts with C9orf72. In terms of processing, inactivated by phosphorylation on Ser-3. Phosphorylated on Ser-3 in resting cells. Dephosphorylated by PDXP/chronophin; this restores its activity in promoting actin filament depolymerization. The phosphorylation of Ser-24 may prevent recognition of the nuclear localization signal. Phosphorylated via a ARRB1-RAC1-LIMK1-PAK1 cascade upon active ligand stimulation of atypical chemokine receptor ACKR2.

It is found in the nucleus matrix. The protein resides in the cytoplasm. It localises to the cytoskeleton. The protein localises to the cell projection. Its subcellular location is the ruffle membrane. It is found in the lamellipodium membrane. The protein resides in the lamellipodium. It localises to the growth cone. The protein localises to the axon. Binds to F-actin and exhibits pH-sensitive F-actin depolymerizing activity. Important for normal progress through mitosis and normal cytokinesis. In conjunction with the subcortical maternal complex (SCMC), plays an essential role for zygotes to progress beyond the first embryonic cell divisions via regulation of actin dynamics. Required for the centralization of the mitotic spindle and symmetric division of zygotes. Plays a role in the regulation of cell morphology and cytoskeletal organization in epithelial cells. Required for the up-regulation of atypical chemokine receptor ACKR2 from endosomal compartment to cell membrane, increasing its efficiency in chemokine uptake and degradation. Required for neural tube morphogenesis and neural crest cell migration. This is Cofilin-1 (Cfl1) from Rattus norvegicus (Rat).